A 255-amino-acid chain; its full sequence is EEF1A lysine methyltransferase 4 (255 aa).

Residues W26 and Y30 each coordinate S-adenosyl-L-methionine. Y39 is modified (phosphotyrosine). S-adenosyl-L-methionine is bound by residues W41, G66, 88–89, 113–114, and K130; these read DY and DV. The Required for methyltransferase activity motif lies at 129–134; it reads EKGTLD.

This sequence belongs to the methyltransferase superfamily.

It carries out the reaction L-lysyl-[protein] + S-adenosyl-L-methionine = N(6)-methyl-L-lysyl-[protein] + S-adenosyl-L-homocysteine + H(+). The enzyme catalyses N(6)-methyl-L-lysyl-[protein] + S-adenosyl-L-methionine = N(6),N(6)-dimethyl-L-lysyl-[protein] + S-adenosyl-L-homocysteine + H(+). It catalyses the reaction N(6),N(6)-dimethyl-L-lysyl-[protein] + S-adenosyl-L-methionine = N(6),N(6),N(6)-trimethyl-L-lysyl-[protein] + S-adenosyl-L-homocysteine + H(+). Protein-lysine methyltransferase that efficiently catalyzes three successive methylations on 'Lys-36' in eukaryotic translation elongation factor 1 alpha (EEF1A1 or EEF1A2). The sequence is that of EEF1A lysine methyltransferase 4 from Bos taurus (Bovine).